We begin with the raw amino-acid sequence, 612 residues long: Sulfite reductase [NADPH] hemoprotein beta-component (612 aa).

Residues 1 to 26 (MDDHKPIETPDGPAVDTPGIGARRYE) are disordered. Positions 469, 475, 514, and 518 each coordinate [4Fe-4S] cluster. Position 518 (Cys-518) interacts with siroheme.

It belongs to the nitrite and sulfite reductase 4Fe-4S domain family. In terms of assembly, alpha(8)-beta(8). The alpha component is a flavoprotein, the beta component is a hemoprotein. Siroheme serves as cofactor. The cofactor is [4Fe-4S] cluster.

The enzyme catalyses hydrogen sulfide + 3 NADP(+) + 3 H2O = sulfite + 3 NADPH + 4 H(+). It participates in sulfur metabolism; hydrogen sulfide biosynthesis; hydrogen sulfide from sulfite (NADPH route): step 1/1. Functionally, component of the sulfite reductase complex that catalyzes the 6-electron reduction of sulfite to sulfide. This is one of several activities required for the biosynthesis of L-cysteine from sulfate. In Methylorubrum extorquens (strain ATCC 14718 / DSM 1338 / JCM 2805 / NCIMB 9133 / AM1) (Methylobacterium extorquens), this protein is Sulfite reductase [NADPH] hemoprotein beta-component.